The chain runs to 728 residues: Diacylglycerol kinase 1 (728 aa).

A helical membrane pass occupies residues 27–48 (GLMFSCFVAALVGILTIAYTAF). 2 Phorbol-ester/DAG-type zinc fingers span residues 79 to 137 (PHSW…PKDC) and 149 to 212 (VHQW…GDIC). Disordered regions lie at residues 265–296 (KQTNETSADTGNSGSNCDESTESTADTGPTVN) and 308–336 (VMNGDSSNGDSDSNGKLEKKPSVKRTGSF). Residues 267-294 (TNETSADTGNSGSNCDESTESTADTGPT) are compositionally biased toward polar residues. Positions 310–319 (NGDSSNGDSD) are enriched in low complexity. The 140-residue stretch at 357-496 (SDARPLLVFI…LDRWKVSILN (140 aa)) folds into the DAGKc domain. Residues lysine 491 and lysine 500 each participate in a glycyl lysine isopeptide (Lys-Gly) (interchain with G-Cter in ubiquitin) cross-link.

It belongs to the eukaryotic diacylglycerol kinase family. Monomer. Expressed in roots, shoots, and leaves.

The protein resides in the membrane. It catalyses the reaction a 1,2-diacyl-sn-glycerol + ATP = a 1,2-diacyl-sn-glycero-3-phosphate + ADP + H(+). Phosphorylates the second messenger diacylglycerol (DAG) to generate phosphatidic acid (PA), another important signaling molecule. PA is required for plant development and responses to abiotic stress and pathogen attack. May be involved in the accumulation of PA during cold stress. In Arabidopsis thaliana (Mouse-ear cress), this protein is Diacylglycerol kinase 1 (DGK1).